The following is a 633-amino-acid chain: Chaperone protein HtpG (633 aa).

The tract at residues 1-344 (MSLQPQAETL…SNDLPLNISR (344 aa)) is a; substrate-binding. The interval 345–560 (ELLQSNEVIN…ENEMSGHLQR (216 aa)) is b. Residues 561–633 (LLIQTGQDFM…KGLNELLLDS (73 aa)) are c.

This sequence belongs to the heat shock protein 90 family. As to quaternary structure, homodimer.

The protein localises to the cytoplasm. Its function is as follows. Molecular chaperone. Has ATPase activity. This is Chaperone protein HtpG from Coxiella burnetii (strain RSA 493 / Nine Mile phase I).